The primary structure comprises 526 residues: Glutamate--tRNA ligase, mitochondrial (526 aa).

Residues 1–38 (MLSYTSCAKLICSRYIVSKISFYSLKRCNSTAVVRTRF) constitute a mitochondrion transit peptide. Residue 37–39 (RFA) participates in L-glutamate binding. Residues 42–50 (PTGFLHLGS) carry the 'HIGH' region motif. H47 lines the ATP pocket. L-glutamate is bound by residues E73, 222–226 (YHFAN), and R240. Residues E243 and 278–282 (KLSKR) each bind ATP. The short motif at 278-282 (KLSKR) is the 'KMSKS' region element.

This sequence belongs to the class-I aminoacyl-tRNA synthetase family. Glutamate--tRNA ligase type 1 subfamily.

Its subcellular location is the mitochondrion. It catalyses the reaction tRNA(Glu) + L-glutamate + ATP = L-glutamyl-tRNA(Glu) + AMP + diphosphate. In terms of biological role, catalyzes the attachment of glutamate to tRNA(Glu) in a two-step reaction: glutamate is first activated by ATP to form Glu-AMP and then transferred to the acceptor end of tRNA(Glu). In Schizosaccharomyces pombe (strain 972 / ATCC 24843) (Fission yeast), this protein is Glutamate--tRNA ligase, mitochondrial (mse1).